A 392-amino-acid chain; its full sequence is GTPase Obg (392 aa).

The Obg domain occupies 1–159 (MKFIDEALIR…RDLQLELMLL (159 aa)). The OBG-type G domain occupies 160-333 (ADVGMLGLPN…LCRDIMDFIE (174 aa)). GTP contacts are provided by residues 166-173 (GLPNAGKS), 191-195 (FTTLV), 213-216 (DIPG), 283-286 (NKID), and 314-316 (SAA). Residues serine 173 and threonine 193 each contribute to the Mg(2+) site. The segment at 362-392 (EQVFTEDDQEGDDWDDWSEDDEEGVEIIYKP) is disordered. The segment covering 365–386 (FTEDDQEGDDWDDWSEDDEEGV) has biased composition (acidic residues).

The protein belongs to the TRAFAC class OBG-HflX-like GTPase superfamily. OBG GTPase family. As to quaternary structure, monomer. Mg(2+) is required as a cofactor.

It is found in the cytoplasm. Its function is as follows. An essential GTPase which binds GTP, GDP and possibly (p)ppGpp with moderate affinity, with high nucleotide exchange rates and a fairly low GTP hydrolysis rate. Plays a role in control of the cell cycle, stress response, ribosome biogenesis and in those bacteria that undergo differentiation, in morphogenesis control. In Histophilus somni (strain 129Pt) (Haemophilus somnus), this protein is GTPase Obg.